The primary structure comprises 727 residues: MQQKTKLFLQALKYSIPHLGKCMQKQHLNHYNFADHYYNRIKLKKYHLTKCLQNKPKISELARNIPSRSFSCKDLQPVKQENEKPLPENMDAFEKVRTKLETQPQEEYEIINVEVKHGGFVYYQEGCCLVRSKDEEADNDNYEVLFNLEELKLDQPFIDCIRVAPDEKYVAAKIRTEDSEASTCVIIKLSDQPVMEASFPNVSSFEWVKDEEDEDVLFYTFQRNLRCHDVYRATFGDNKRNERFYTEKDPSYFVFLYLTKDSRFLTINIMNKTTSEVWLIDGLSPWDPPVLIQKRIHGVLYYVEHRDDELYILTNVGEPTEFKLMRTAADTPAIMNWDLFFTMKRNTKVIDLDMFKDHCVLFLKHSNLLYVNVIGLADDSVRSLKLPPWACGFIMDTNSDPKNCPFQLCSPIRPPKYYTYKFAEGKLFEETGHEDPITKTSRVLRLEAKSKDGKLVPMTVFHKTDSEDLQKKPLLVQVYGAYGIDLKMNFRPERRVLVDDGWILAYCHVRGGGELGLQWHADGRLTKKLNGLADLEACIKTLHGQGFSQPSLTTLTAFSAGGVLAGALCNSNPELLRAVTLEAPFLDVLNTMMDTTLPLTLEELEEWGNPSSDEKHKNYIKHYCPYQNIKPQHYPSIHITAYENDERVPLKGIVSYTEKLKEAIAEHAKDTGEGYQSPNIILDIQPGGNHVIEDSHKKITAQIKFLYEELGLDSTSVFEDLKKYLKF.

Residues S559, D645, and H690 each act as charge relay system in the active site.

It belongs to the peptidase S9A family. Homodimer. Interacts with the AP-1 complex.

It localises to the cytoplasm. It is found in the cytosol. The protein localises to the golgi apparatus. Its subcellular location is the trans-Golgi network. The protein resides in the cytoskeleton. It localises to the nucleus. Serine peptidase whose precise substrate specificity remains unclear. Does not cleave peptides after a arginine or lysine residue. Regulates trans-Golgi network morphology and sorting by regulating the membrane binding of the AP-1 complex. May play a role in the regulation of synaptic vesicle exocytosis. In Pongo abelii (Sumatran orangutan), this protein is Prolyl endopeptidase-like (PREPL).